Here is a 260-residue protein sequence, read N- to C-terminus: Thiazole synthase (260 aa).

K96 acts as the Schiff-base intermediate with DXP in catalysis. Residues G157, A184–G185, and N206–T207 contribute to the 1-deoxy-D-xylulose 5-phosphate site.

It belongs to the ThiG family. As to quaternary structure, homotetramer. Forms heterodimers with either ThiH or ThiS.

The protein resides in the cytoplasm. The catalysed reaction is [ThiS sulfur-carrier protein]-C-terminal-Gly-aminoethanethioate + 2-iminoacetate + 1-deoxy-D-xylulose 5-phosphate = [ThiS sulfur-carrier protein]-C-terminal Gly-Gly + 2-[(2R,5Z)-2-carboxy-4-methylthiazol-5(2H)-ylidene]ethyl phosphate + 2 H2O + H(+). The protein operates within cofactor biosynthesis; thiamine diphosphate biosynthesis. Functionally, catalyzes the rearrangement of 1-deoxy-D-xylulose 5-phosphate (DXP) to produce the thiazole phosphate moiety of thiamine. Sulfur is provided by the thiocarboxylate moiety of the carrier protein ThiS. In vitro, sulfur can be provided by H(2)S. The protein is Thiazole synthase of Nitrobacter hamburgensis (strain DSM 10229 / NCIMB 13809 / X14).